Consider the following 558-residue polypeptide: Adenine deaminase (558 aa).

This sequence belongs to the metallo-dependent hydrolases superfamily. Adenine deaminase family. Mn(2+) is required as a cofactor.

It catalyses the reaction adenine + H2O + H(+) = hypoxanthine + NH4(+). This is Adenine deaminase from Methanoregula boonei (strain DSM 21154 / JCM 14090 / 6A8).